The following is a 245-amino-acid chain: 2,3-bisphosphoglycerate-dependent phosphoglycerate mutase (245 aa).

Substrate-binding positions include 8–15 (RHGQSLWN), 21–22 (TG), Arg60, 87–90 (ERHY), Lys98, 114–115 (RR), and 183–184 (GN). His9 acts as the Tele-phosphohistidine intermediate in catalysis. Residue Glu87 is the Proton donor/acceptor of the active site.

This sequence belongs to the phosphoglycerate mutase family. BPG-dependent PGAM subfamily.

It carries out the reaction (2R)-2-phosphoglycerate = (2R)-3-phosphoglycerate. It participates in carbohydrate degradation; glycolysis; pyruvate from D-glyceraldehyde 3-phosphate: step 3/5. Its function is as follows. Catalyzes the interconversion of 2-phosphoglycerate and 3-phosphoglycerate. The chain is 2,3-bisphosphoglycerate-dependent phosphoglycerate mutase from Bacillus thuringiensis (strain Al Hakam).